The primary structure comprises 598 residues: MDSYDLFRRLGAGAKFDVKRFSADATRFQVGKRKFGSDSSETVKGLDFFGNKKSVSDECGGLQTQQELQNEETTEGGLLERSKEPKKKKRKKMTADVPAQEDLDGTIQWTSSVEAKLQDKKANGEKKLTSEKLEHLRKEKINFFRNKHKIHVQGTDLPDPIATFQQLDQEYKISPRLLQNILDAGFQVPTPIQMQAIPVMLHGRELLASAPTGSGKTLAFSIPILMQLKQPTNKGFRALVISPTRELASQIHRELIKISEGTGFRIHMIHKAAIAAKKFGPKSSKKFDILVTTPNRLIYLLKQEPPGIDLTSVEWLVVDESDKLFEDGKTGFRDQLASIFLACTSPKVRRAMFSATFAYDVEQWCKLNLDNIVSVSIGARNSAVETVEQELLFVGSETGKLLAMRELVKKGFNPPVLVFVQSIERAKELFHELIYEGINVDVIHAERTQQQRDNTVHSFRAGKIWVLICTALLARGIDFKGVNLVINYDFPTSSVEYIHRIGRTGRAGNRGKAVTFFTEDDKPLLRSVANVIQQAGCPVPEYIKGFQKLLSKQKKKMIKKPLERESISTTPKYFLEQAKQKKVAGQNSKKKETLKGKS.

Lys15 carries the N6-acetyllysine modification. Position 39 is a phosphoserine (Ser39). Positions 59 to 98 (CGGLQTQQELQNEETTEGGLLERSKEPKKKKRKKMTADVP) are disordered. The Q motif motif lies at 166-194 (QLDQEYKISPRLLQNILDAGFQVPTPIQM). One can recognise a Helicase ATP-binding domain in the interval 197-375 (IPVMLHGREL…KLNLDNIVSV (179 aa)). Residue 210 to 217 (APTGSGKT) participates in ATP binding. A DEAD box motif is present at residues 319–322 (DESD). The region spanning 386 to 547 (TVEQELLFVG…PVPEYIKGFQ (162 aa)) is the Helicase C-terminal domain. Residues 578–598 (AKQKKVAGQNSKKKETLKGKS) form a disordered region. Basic and acidic residues predominate over residues 589–598 (KKKETLKGKS).

The protein belongs to the DEAD box helicase family. DDX52/ROK1 subfamily.

The protein resides in the nucleus. It localises to the nucleolus. It carries out the reaction ATP + H2O = ADP + phosphate + H(+). In terms of biological role, required for efficient ribosome biogenesis. May control cell cycle progression by regulating translation of mRNAs that contain a terminal oligo pyrimidine (TOP) motif in their 5' UTRs, such as GTPBP4. The sequence is that of Probable ATP-dependent RNA helicase DDX52 (Ddx52) from Rattus norvegicus (Rat).